Here is a 371-residue protein sequence, read N- to C-terminus: Probable trehalose-phosphate phosphatase 1 (371 aa).

The protein belongs to the trehalose phosphatase family. Requires a divalent metal cation as cofactor. Expressed in roots and shoots.

It carries out the reaction alpha,alpha-trehalose 6-phosphate + H2O = alpha,alpha-trehalose + phosphate. It functions in the pathway glycan biosynthesis; trehalose biosynthesis. Functionally, removes the phosphate from trehalose 6-phosphate to produce free trehalose. Trehalose accumulation in plant improves abiotic stress tolerance. The chain is Probable trehalose-phosphate phosphatase 1 (TPP1) from Oryza sativa subsp. japonica (Rice).